A 128-amino-acid chain; its full sequence is Nanos homolog 1 (128 aa).

Positions 7–23 are essential for its translational repressor activity; that stretch reads FDSWSDYLGLSSLISRG. Positions 25–52 are disordered; the sequence is QPQREGERPRWDVLSPASAEPLPSNESV. The segment at 56-110 adopts a Nanos-type zinc-finger fold; it reads GCGFCRSNREALSLYTSHRLRALDGRVLCPVLRGYTCPLCGANGDWAHTMRYCPL. The Zn(2+) site is built by Cys57, Cys60, His73, Cys84, Cys92, Cys95, His103, and Cys108. Short sequence motifs (C2HC) lie at residues 57–84 and 92–108; these read CGFCRSNREALSLYTSHRLRALDGRVLC and CPLCGANGDWAHTMRYC.

The protein belongs to the nanos family. As to quaternary structure, interacts with ccnb1. Ovary and testis.

The protein resides in the cytoplasm. The protein localises to the perinuclear region. In terms of biological role, acts as a translational repressor. Can mediate repression affecting different steps in the translation process: cap-driven, IRES-driven, polyadenylated RNAs or nonpolyadenylated RNAs. Essential for the development of primordial germ cells (PGCs) by ensuring their proper migration and survival. The polypeptide is Nanos homolog 1 (nanos1) (Xenopus laevis (African clawed frog)).